Here is a 650-residue protein sequence, read N- to C-terminus: Chaperone protein DnaK (650 aa).

Threonine 200 is modified (phosphothreonine; by autocatalysis). The interval 614–635 (AGAAGAAGAAEGAAHAGGAQQA) is disordered.

The protein belongs to the heat shock protein 70 family.

Functionally, acts as a chaperone. The polypeptide is Chaperone protein DnaK (Burkholderia lata (strain ATCC 17760 / DSM 23089 / LMG 22485 / NCIMB 9086 / R18194 / 383)).